The chain runs to 415 residues: Gamma-glutamyl phosphate reductase (415 aa).

It belongs to the gamma-glutamyl phosphate reductase family.

Its subcellular location is the cytoplasm. The catalysed reaction is L-glutamate 5-semialdehyde + phosphate + NADP(+) = L-glutamyl 5-phosphate + NADPH + H(+). It functions in the pathway amino-acid biosynthesis; L-proline biosynthesis; L-glutamate 5-semialdehyde from L-glutamate: step 2/2. Catalyzes the NADPH-dependent reduction of L-glutamate 5-phosphate into L-glutamate 5-semialdehyde and phosphate. The product spontaneously undergoes cyclization to form 1-pyrroline-5-carboxylate. In Mycobacterium bovis (strain BCG / Pasteur 1173P2), this protein is Gamma-glutamyl phosphate reductase.